Reading from the N-terminus, the 617-residue chain is Vacuolar protein sorting-associated protein 33B (617 aa).

Alanine 2 carries the post-translational modification N-acetylalanine.

It belongs to the STXBP/unc-18/SEC1 family. As to quaternary structure, interacts with RAB11A and VIPAS39. Associates with adapter protein complex 3 (AP-3), clathrin:AP-3 and clathrin:HGS complexes. Phosphorylated on tyrosine residues.

It is found in the late endosome membrane. The protein localises to the lysosome membrane. Its subcellular location is the early endosome. It localises to the cytoplasmic vesicle. The protein resides in the clathrin-coated vesicle. It is found in the recycling endosome. May play a role in vesicle-mediated protein trafficking to lysosomal compartments and in membrane docking/fusion reactions of late endosomes/lysosomes. Required for proper trafficking and targeting of the collagen-modifying enzyme lysyl hydroxylase 3 (LH3) to intracellular collagen. Mediates phagolysosomal fusion in macrophages. Proposed to be involved in endosomal maturation implicating in part VIPAS39. In epithelial cells, the VPS33B:VIPAS39 complex may play a role in the apical RAB11A-dependentrecycling pathway and in the maintenance of the apical-basolateral polarity. Seems to be involved in the sorting of specific cargos from the trans-Golgi network to alpha-granule-destined multivesicular bodies (MVBs) promoting MVBs maturation in megakaryocytes. The chain is Vacuolar protein sorting-associated protein 33B (Vps33b) from Mus musculus (Mouse).